A 440-amino-acid polypeptide reads, in one-letter code: Xaa-Pro dipeptidase (440 aa).

5 residues coordinate Mn(2+): Asp-244, Asp-255, His-336, Glu-381, and Glu-420.

It belongs to the peptidase M24B family. It depends on Mn(2+) as a cofactor. The N-terminus is blocked.

The enzyme catalyses Xaa-L-Pro dipeptide + H2O = an L-alpha-amino acid + L-proline. It carries out the reaction diisopropyl fluorophosphate + H2O = diisopropyl phosphate + fluoride + 2 H(+). Functionally, splits dipeptides with a prolyl or hydroxyprolyl residue in the C-terminal position and a nonpolar amino acid at the N-terminal position. Also catalyzes the hydrolysis of toxic organophosphorus cholinesterase-inhibiting compounds including nerve gases such as diisopropylfluorophosphate (DFP), O-isopropyl methylphosphonofluoridate (sarin), O-pinacolyl methylphosphonofluoridate (soman), and O-cyclohexyl methylphosphonofluoridate. In Pseudoalteromonas haloplanktis (Alteromonas haloplanktis), this protein is Xaa-Pro dipeptidase (pepQ).